Reading from the N-terminus, the 335-residue chain is Auxin-responsive protein IAA6 (335 aa).

Residues 51–55 carry the EAR-like (transcriptional repression) motif; the sequence is LKLGL. 3 disordered regions span residues 81-102, 143-180, and 188-207; these read LSFF…GAKR, KKGC…VGWP, and NLAS…DNAN. The 105-residue stretch at 217–321 folds into the PB1 domain; it reads NPLVKINMDG…TAKRLRVLRS (105 aa).

It belongs to the Aux/IAA family. Homodimers and heterodimers. As to expression, highly expressed in roots. Expressed in shoots and flowers.

It is found in the nucleus. Functionally, aux/IAA proteins are short-lived transcriptional factors that function as repressors of early auxin response genes at low auxin concentrations. The polypeptide is Auxin-responsive protein IAA6 (IAA6) (Oryza sativa subsp. japonica (Rice)).